We begin with the raw amino-acid sequence, 273 residues long: Karrikin insensitive 2 receptor B (273 aa).

S95 functions as the Nucleophile in the catalytic mechanism. D217 is a catalytic residue.

This sequence belongs to the AB hydrolase superfamily. In terms of tissue distribution, expressed in stigma.

Its subcellular location is the nucleus. It is found in the cytoplasm. In terms of biological role, may be involved in plant olfaction during volatile communication. This Petunia hybrida (Petunia) protein is Karrikin insensitive 2 receptor B.